The chain runs to 1124 residues: ATP-dependent DNA helicase mph1 (1124 aa).

2 disordered regions span residues 1–103 (MFTL…EARS) and 123–302 (QLTQ…PTQH). Composition is skewed to acidic residues over residues 7 to 17 (DSSDYFDDDLG) and 169 to 178 (RDDEYDDDEE). Polar residues predominate over residues 210-222 (TPIIGQQSTTIEA). The span at 226-236 (LLDDIPDDAFD) shows a compositional bias: acidic residues. Polar residues predominate over residues 255-271 (SFTQSTNRPLGVRQTTL). The 169-residue stretch at 328–496 (IAQKGLFHNL…AVIDGLDISR (169 aa)) folds into the Helicase ATP-binding domain. 341-348 (LPTGLGKT) is a binding site for ATP. Residues 444-447 (DEAH) carry the DEAH box motif. The Helicase C-terminal domain occupies 666-840 (YLKQVVLNHF…GTRFTFHDDM (175 aa)). Residues 855-873 (KRAIDIPEENTVRDLPEPK) are compositionally biased toward basic and acidic residues. 2 disordered regions span residues 855 to 923 (KRAI…TPEP) and 1016 to 1124 (MPKA…DSDD). Basic residues-rich tracts occupy residues 874–886 (RRGR…PKKF) and 906–916 (SKRRVPNKSKA).

Belongs to the DEAD box helicase family. DEAH subfamily. FANCM sub-subfamily. Interacts with the MHF histone-fold complex to form the FANCM-MHF complex.

It localises to the nucleus. It catalyses the reaction ATP + H2O = ADP + phosphate + H(+). In terms of biological role, ATP-dependent DNA helicase involved in DNA damage repair by homologous recombination and in genome maintenance. Capable of unwinding D-loops. Plays a role in limiting crossover recombinants during mitotic DNA double-strand break (DSB) repair. Component of a FANCM-MHF complex which promotes gene conversion at blocked replication forks, probably by reversal of the stalled fork. In Aspergillus niger (strain ATCC MYA-4892 / CBS 513.88 / FGSC A1513), this protein is ATP-dependent DNA helicase mph1.